The primary structure comprises 255 residues: 4-hydroxy-tetrahydrodipicolinate reductase (255 aa).

NAD(+)-binding positions include 8-13 (GSTGRM), 88-90 (ATT), and 112-115 (SSNM). H144 functions as the Proton donor/acceptor in the catalytic mechanism. H145 is a (S)-2,3,4,5-tetrahydrodipicolinate binding site. Catalysis depends on K148, which acts as the Proton donor. 154–155 (GT) contributes to the (S)-2,3,4,5-tetrahydrodipicolinate binding site.

The protein belongs to the DapB family.

The protein resides in the cytoplasm. The enzyme catalyses (S)-2,3,4,5-tetrahydrodipicolinate + NAD(+) + H2O = (2S,4S)-4-hydroxy-2,3,4,5-tetrahydrodipicolinate + NADH + H(+). The catalysed reaction is (S)-2,3,4,5-tetrahydrodipicolinate + NADP(+) + H2O = (2S,4S)-4-hydroxy-2,3,4,5-tetrahydrodipicolinate + NADPH + H(+). It participates in amino-acid biosynthesis; L-lysine biosynthesis via DAP pathway; (S)-tetrahydrodipicolinate from L-aspartate: step 4/4. Catalyzes the conversion of 4-hydroxy-tetrahydrodipicolinate (HTPA) to tetrahydrodipicolinate. The sequence is that of 4-hydroxy-tetrahydrodipicolinate reductase from Sulfurovum sp. (strain NBC37-1).